Consider the following 181-residue polypeptide: Oligoribonuclease (181 aa).

In terms of domain architecture, Exonuclease spans 8-171; the sequence is LIWIDLEMTG…DDIRESVAEL (164 aa). Tyr129 is an active-site residue.

The protein belongs to the oligoribonuclease family. Homodimer.

Its subcellular location is the cytoplasm. In terms of biological role, 3'-to-5' exoribonuclease specific for small oligoribonucleotides. The sequence is that of Oligoribonuclease from Escherichia coli O157:H7.